Reading from the N-terminus, the 199-residue chain is Adenylyl-sulfate kinase (199 aa).

34–41 (GLSGSGKS) contributes to the ATP binding site. Serine 108 functions as the Phosphoserine intermediate in the catalytic mechanism.

Belongs to the APS kinase family.

It carries out the reaction adenosine 5'-phosphosulfate + ATP = 3'-phosphoadenylyl sulfate + ADP + H(+). The protein operates within sulfur metabolism; hydrogen sulfide biosynthesis; sulfite from sulfate: step 2/3. In terms of biological role, catalyzes the synthesis of activated sulfate. The protein is Adenylyl-sulfate kinase of Staphylococcus carnosus (strain TM300).